The following is a 753-amino-acid chain: 5-methyltetrahydropteroyltriglutamate--homocysteine methyltransferase (753 aa).

5-methyltetrahydropteroyltri-L-glutamate is bound by residues 17 to 20 (RELK) and Lys-117. L-homocysteine is bound by residues 431–433 (IGS) and Glu-484. Residues 431–433 (IGS) and Glu-484 contribute to the L-methionine site. 5-methyltetrahydropteroyltri-L-glutamate-binding positions include 515–516 (RC) and Trp-561. Asp-599 lines the L-homocysteine pocket. Asp-599 contacts L-methionine. Glu-605 serves as a coordination point for 5-methyltetrahydropteroyltri-L-glutamate. His-641, Cys-643, and Glu-665 together coordinate Zn(2+). His-694 serves as the catalytic Proton donor. Cys-726 is a Zn(2+) binding site.

It belongs to the vitamin-B12 independent methionine synthase family. Requires Zn(2+) as cofactor.

The catalysed reaction is 5-methyltetrahydropteroyltri-L-glutamate + L-homocysteine = tetrahydropteroyltri-L-glutamate + L-methionine. Its pathway is amino-acid biosynthesis; L-methionine biosynthesis via de novo pathway; L-methionine from L-homocysteine (MetE route): step 1/1. Catalyzes the transfer of a methyl group from 5-methyltetrahydrofolate to homocysteine resulting in methionine formation. This is 5-methyltetrahydropteroyltriglutamate--homocysteine methyltransferase from Citrobacter koseri (strain ATCC BAA-895 / CDC 4225-83 / SGSC4696).